The primary structure comprises 312 residues: tRNA uridine(34) hydroxylase (312 aa).

One can recognise a Rhodanese domain in the interval 145–235 (ENKNSVLVDM…GIIKYVRDAR (91 aa)). Cysteine 199 (cysteine persulfide intermediate) is an active-site residue.

It belongs to the TrhO family.

The enzyme catalyses uridine(34) in tRNA + AH2 + O2 = 5-hydroxyuridine(34) in tRNA + A + H2O. In terms of biological role, catalyzes oxygen-dependent 5-hydroxyuridine (ho5U) modification at position 34 in tRNAs. The protein is tRNA uridine(34) hydroxylase of Buchnera aphidicola subsp. Baizongia pistaciae (strain Bp).